We begin with the raw amino-acid sequence, 580 residues long: Serine/threonine-protein kinase PINK1, mitochondrial (580 aa).

The N-terminal 77 residues, 1 to 77, are a transit peptide targeting the mitochondrion; the sequence is MAVRQALGRG…RFFRQSVAGL (77 aa). Positions 28–60 are disordered; it reads VSGWGKPGPGAAWGRGERPGRVSSPGAQPRPLG. Residues 94-110 form a helical membrane-spanning segment; sequence GPCGRAVFLAFGLGLGL. The segment at 111-117 is required for outer membrane localization; that stretch reads IEEKQAE. The 355-residue stretch at 156–510 folds into the Protein kinase domain; that stretch reads YLIGQAIGKG…IAANVLHLSL (355 aa). ATP is bound by residues 162-170 and lysine 218; that span reads IGKGCNAAV. Serine 227 is modified (phosphoserine; by autocatalysis). The active-site Proton acceptor is the aspartate 361. Serine 401 carries the phosphoserine; by autocatalysis modification.

Belongs to the protein kinase superfamily. Ser/Thr protein kinase family. As to quaternary structure, upon mitochondrial depolarization, it forms a supercomplex with TOM and TIM23 complexes. PINK1-TOM-TIM23 supercomplex formation requires PINK1 interaction with TOMM20 and TOMM70 and is critical for PINK1 stabilization at the outer mitochondrial membrane, kinase activation and downstream mitophagy. Upon mitochondrial depolarization, interacts with TIMM23; the interaction is required for PINK1 accumulation at the outer mitochondrial membrane, kinase activation by autophosphorylation and PRKN recruitement to mitochondria. Interacts with PRKN. Interacts with FBXO7. Forms a complex with PRKN and PARK7. Interacts with NENF. It depends on Mg(2+) as a cofactor. Post-translationally, proteolytically cleaved. In healthy cells, the precursor is continuously imported into the inner mitochondrial membrane (IMM), where it is proteolytically cleaved by mitochondrial-processing peptidase (MPP) and then undergoes further proteolytic cleavage by PARL or AFG3L2 to give rise to the 52 kDa short form. The 52 kDa short form is then released into the cytosol where it rapidly undergoes proteasome-dependent degradation. In unhealthy cells, when cellular stress conditions lead to the loss of mitochondrial membrane potential, mitochondrial import is impaired leading to the precursor accumulating on the outer mitochondrial membrane (OMM). If accumulation at the OMM fails and it is imported into the depolarized mitochondria, it undergoes cleavage by the IMM protease OMA1, promoting its subsequent degradation by the proteasome. In terms of processing, autophosphorylated. Loss of mitochondrial membrane potential results in the precursor accumulating on the outer mitochondrial membrane (OMM) where it is activated by autophosphorylation. Autophosphorylation at Ser-227 and Ser-401 is sufficient and essential for selective recruitment of PRKN to depolarized mitochondria, via PINK1-dependent phosphorylation of ubiquitin and maybe PRKN.

The protein localises to the mitochondrion outer membrane. The protein resides in the mitochondrion inner membrane. It is found in the cytoplasm. Its subcellular location is the cytosol. The catalysed reaction is L-seryl-[protein] + ATP = O-phospho-L-seryl-[protein] + ADP + H(+). It carries out the reaction L-threonyl-[protein] + ATP = O-phospho-L-threonyl-[protein] + ADP + H(+). Serine/threonine-protein kinase which acts as a sensor of mitochondrial damage and protects against mitochondrial dysfunction during cellular stress. It phosphorylates mitochondrial proteins to coordinate mitochondrial quality control mechanisms that remove and replace dysfunctional mitochondrial components. Depending on the severity of mitochondrial damage, activity ranges from preventing apoptosis and stimulating mitochondrial biogenesis to eliminating severely damaged mitochondria via PINK1-PRKN-dependent mitophagy. When cellular stress results in irreversible mitochondrial damage, PINK1 accumulates at the outer mitochondrial membrane (OMM) where it phosphorylates pre-existing polyubiquitin chains at 'Ser-65', recruits PRKN from the cytosol to the OMM and activates PRKN by phosphorylation at 'Ser-65'; activated PRKN then ubiquinates VDAC1 and other OMM proteins to initiate mitophagy. The PINK1-PRKN pathway also promotes fission of damaged mitochondria through phosphorylation and PRKN-dependent degradation of mitochondrial proteins involved in fission such as MFN2. This prevents the refusion of unhealthy mitochondria with the mitochondrial network or initiates mitochondrial fragmentation facilitating their later engulfment by autophagosomes. Also promotes mitochondrial fission independently of PRKN and ATG7-mediated mitophagy, via the phosphorylation and activation of DNM1L. Regulates motility of damaged mitochondria by promoting the ubiquitination and subsequent degradation of MIRO1 and MIRO2; in motor neurons, this likely inhibits mitochondrial intracellular anterograde transport along the axons which probably increases the chance of the mitochondria undergoing mitophagy in the soma. Required for ubiquinone reduction by mitochondrial complex I by mediating phosphorylation of complex I subunit NDUFA10. Phosphorylates LETM1, positively regulating its mitochondrial calcium transport activity. This chain is Serine/threonine-protein kinase PINK1, mitochondrial, found in Rattus norvegicus (Rat).